The following is a 490-amino-acid chain: Myocilin (490 aa).

The first 18 residues, 1-18 (MPAVQLLLLAGLVWGAGA), serve as a signal peptide directing secretion. Positions 55-170 (SAIQDLQRDS…QEVARLARGQ (116 aa)) form a coiled coil. The segment at 168–187 (RGQCPQARDTSQDVPAGSRE) is disordered. Residues 230-489 (GCGELVWVGQ…MVTYDIKLSK (260 aa)) form the Olfactomedin-like domain. A disulfide bridge connects residues Cys-231 and Cys-419. Asp-366, Asn-414, Ala-415, Ile-463, and Asp-464 together coordinate Ca(2+). A Microbody targeting signal motif is present at residues 488–490 (SKI).

Homodimer (via N-terminus). Can also form higher oligomers. Interacts with OLFM3, FN1, NRCAM, GLDN and NFASC. Interacts (via N-terminus) with MYL2. Interacts with SFRP1, FRZB, FZD7, FZD10, FZD1 and WIF1; regulates Wnt signaling. Interacts with SNTA1; regulates muscle hypertrophy. Interacts with ERBB2 and ERBB3; activates ERBB2-ERBB3 signaling pathway. Interacts with SNCG; affects its secretion and its aggregation. Post-translationally, palmitoylated. In terms of processing, glycosylated. Undergoes a calcium-dependent proteolytic cleavage at Arg-212 by CAPN2 in the endoplasmic reticulum. The result is the production of two fragments, one of 35 kDa containing the C-terminal olfactomedin-like domain, and another of 20 kDa containing the N-terminal leucine zipper-like domain. As to expression, detected in eye aqueous humor (at protein level).

The protein localises to the secreted. Its subcellular location is the golgi apparatus. It is found in the cytoplasmic vesicle. It localises to the extracellular space. The protein resides in the extracellular matrix. The protein localises to the extracellular exosome. Its subcellular location is the mitochondrion. It is found in the mitochondrion intermembrane space. It localises to the mitochondrion inner membrane. The protein resides in the mitochondrion outer membrane. The protein localises to the rough endoplasmic reticulum. Its subcellular location is the cell projection. It is found in the cilium. It localises to the endoplasmic reticulum. In terms of biological role, secreted glycoprotein regulating the activation of different signaling pathways in adjacent cells to control different processes including cell adhesion, cell-matrix adhesion, cytoskeleton organization and cell migration. Promotes substrate adhesion, spreading and formation of focal contacts. Negatively regulates cell-matrix adhesion and stress fiber assembly through Rho protein signal transduction. Modulates the organization of actin cytoskeleton by stimulating the formation of stress fibers through interactions with components of Wnt signaling pathways. Promotes cell migration through activation of PTK2 and the downstream phosphatidylinositol 3-kinase signaling. Plays a role in bone formation and promotes osteoblast differentiation in a dose-dependent manner through mitogen-activated protein kinase signaling. Mediates myelination in the peripheral nervous system through ERBB2/ERBB3 signaling. Plays a role as a regulator of muscle hypertrophy through the components of dystrophin-associated protein complex. Involved in positive regulation of mitochondrial depolarization. Plays a role in neurite outgrowth. May participate in the obstruction of fluid outflow in the trabecular meshwork. The chain is Myocilin from Oryctolagus cuniculus (Rabbit).